Reading from the N-terminus, the 785-residue chain is Proprotein convertase subtilisin/kexin type 7 (785 aa).

Positions 1 to 37 (MPKGRQKVPHLDAPLGLPTCLWLELAGLFLLVPWVMG) are cleaved as a signal peptide. Positions 38–141 (LAGTGGPDGQ…EQRLLRRAKR (104 aa)) are excised as a propeptide. The Extracellular segment spans residues 142-667 (SVHFNDPKYP…YTITPNTLKT (526 aa)). One can recognise a Peptidase S8 domain in the interval 153–473 (QWHLNNRRSP…FGLLNAWRLV (321 aa)). N-linked (GlcNAc...) asparagine glycans are attached at residues N167 and N175. D187 (charge relay system) is an active-site residue. Positions 197–219 (IAPNYSPEGSYDLNSNDPDPMPH) are disordered. Catalysis depends on H228, which acts as the Charge relay system. The N-linked (GlcNAc...) asparagine glycan is linked to N241. S406 serves as the catalytic Charge relay system. One can recognise a P/Homo B domain in the interval 481-618 (SVPYLASYVS…QLTLYGSVWS (138 aa)). The N-linked (GlcNAc...) asparagine glycan is linked to N511. A helical membrane pass occupies residues 668–688 (LVLVGCFTVFWTVYYMLEVYL). Residues 689–785 (SQRNVASNQV…VPHGKEEQIC (97 aa)) lie on the Cytoplasmic side of the membrane. Positions 700-751 (RSGPCHWPHRSRKAKEEGTELESVPLCSSKDPDEVETESRGPPTTSDLLAPD) are disordered.

This sequence belongs to the peptidase S8 family. It depends on Ca(2+) as a cofactor. Post-translationally, cysteine residues in the cytoplasmic tail are probably palmitoylated. In terms of processing, N-glycosylated. Expressed in spleen, thymus, prostate, testis, ovary, small intestine, colon and peripheral blood leukocyte.

The protein localises to the golgi apparatus. It localises to the trans-Golgi network membrane. Its activity is regulated as follows. Inhibited by zinc and copper. In terms of biological role, serine endoprotease that processes various proproteins by cleavage at paired basic amino acids, recognizing the RXXX[KR]R consensus motif. Likely functions in the constitutive secretory pathway. The sequence is that of Proprotein convertase subtilisin/kexin type 7 (PCSK7) from Homo sapiens (Human).